Here is a 259-residue protein sequence, read N- to C-terminus: Proteasome subunit beta type-4 (259 aa).

This sequence belongs to the peptidase T1B family. The 26S proteasome consists of a 20S proteasome core and two 19S regulatory subunits. The 20S proteasome core is composed of 28 subunits that are arranged in four stacked rings, resulting in a barrel-shaped structure. The two end rings are each formed by seven alpha subunits, and the two central rings are each formed by seven beta subunits. The catalytic chamber with the active sites is on the inside of the barrel.

It localises to the cytoplasm. It is found in the nucleus. Non-catalytic component of the proteasome, a multicatalytic proteinase complex which is characterized by its ability to cleave peptides with Arg, Phe, Tyr, Leu, and Glu adjacent to the leaving group at neutral or slightly basic pH. The proteasome has an ATP-dependent proteolytic activity. The protein is Proteasome subunit beta type-4 (psmB4-1) of Dictyostelium discoideum (Social amoeba).